The following is a 707-amino-acid chain: MVAFGKKLKERSIEEWQEYYINYKLMKKKVKQYGPQIEVGSLDRRHVLKDFSRMLDHQIEKIALFMLEQQGLLSSRLQKLREWHDTLQDEPDLSQIAKLREAYRAVGQDLLKLLFFIDMNAIGIRKILKKFDKRFGYRFTNYYVKTRADHPYSQLQQVFRHVGLGAVVGAISRNLHELQNNEGSYLSIYDQPVLPLQDPVVDSIKNAVDRLTHSTNFLNFMAQHALIMQDDEDLLMLPPDEQAEKEEGRYHFMSLLLNLANTFLYMVNTYIIVPTADDYSMSLGAAATVCGVVIGAMAVAQLFSSVYFSAWSNKSYFKPLIFSSIVLFFGNLLYALAYDFNSLALLLIGRLFCGFGSARAVNRRYISDCVPLKIRMQASAGFVSASALGMACGPALAGLLQTDFKIKNVTFNQDTLPGWVMAVAWLLYLVWLAISFREPAREPEEIHTSQESTSEQIFCGEADQDGNIEKGLKKPLLLASEETEHDEEDDGDGSEESSDDSRKPANSFVAAYKLLTPSVKVQLLIYFMLKYAMEILLSESSVVTTYYFGWSMSSVSIFLFCLGLTVLPVNLVVGSYISNMFEDRQILLASEIMVCIGIVLSFHVVIPYTVPQYVISGFIMFVSAEVLEGVNLSLLSRVMSSRLSRGTYNGGLLSTEAGTIARVIADATITLAGFLGQSMLLNVTLLPSLIICVLSILATCYTYNSLY.

Residues 2–145 (VAFGKKLKER…GYRFTNYYVK (144 aa)) enclose the SPX domain. 6 consecutive transmembrane segments (helical) span residues 252 to 272 (FMSLLLNLANTFLYMVNTYII), 283 to 303 (LGAAATVCGVVIGAMAVAQLF), 320 to 340 (LIFSSIVLFFGNLLYALAYDF), 342 to 361 (SLALLLIGRLFCGFGSARAV), 380 to 400 (AGFVSASALGMACGPALAGLL), and 416 to 436 (LPGWVMAVAWLLYLVWLAISF). The span at 481–498 (EETEHDEEDDGDGSEESS) shows a compositional bias: acidic residues. The segment at 481 to 503 (EETEHDEEDDGDGSEESSDDSRK) is disordered. 5 helical membrane passes run 523-543 (LLIYFMLKYAMEILLSESSVV), 557-577 (IFLFCLGLTVLPVNLVVGSYI), 586-606 (ILLASEIMVCIGIVLSFHVVI), 614-634 (VISGFIMFVSAEVLEGVNLSL), and 679-699 (MLLNVTLLPSLIICVLSILAT).

This sequence belongs to the major facilitator superfamily.

It is found in the membrane. In Arabidopsis thaliana (Mouse-ear cress), this protein is SPX domain-containing membrane protein At4g11810.